Reading from the N-terminus, the 310-residue chain is Syndecan-1 (310 aa).

The N-terminal stretch at 1 to 22 (MRRAALWLWLCALALSLQPALP) is a signal peptide. Residues 23-254 (QIVATNLPPE…GLLDRKEVLG (232 aa)) lie on the Extracellular side of the membrane. 2 disordered regions span residues 27–100 (TNLP…EGPK) and 114–212 (LTAR…QDFT). Positions 32–42 (EDQDGSGDDSD) are enriched in acidic residues. The O-linked (Xyl...) (chondroitin sulfate) serine glycan is linked to Ser-37. An N-linked (GlcNAc...) asparagine glycan is attached at Asn-43. O-linked (Xyl...) (heparan sulfate) serine glycans are attached at residues Ser-45 and Ser-47. Residues 55–75 (ITLSQQTPSTWKDTQLLTAIP) show a composition bias toward polar residues. Residues 117 to 127 (REQEATPRPRE) are compositionally biased toward basic and acidic residues. Low complexity predominate over residues 128–151 (TTQLPTTHLASTTTATTAQEPATS). The segment covering 153–164 (PHRDMQPGHHET) has biased composition (basic and acidic residues). 2 O-linked (Xyl...) (chondroitin sulfate) serine glycosylation sites follow: Ser-206 and Ser-216. Residues 255–275 (GVIAGGLVGLIFAVCLVGFML) traverse the membrane as a helical segment. The Cytoplasmic portion of the chain corresponds to 276-310 (YRMKKKDEGSYSLEEPKQANGGAYQKPTKQEEFYA). Positions 284 to 310 (GSYSLEEPKQANGGAYQKPTKQEEFYA) are disordered. Ser-285 carries the phosphoserine modification.

This sequence belongs to the syndecan proteoglycan family. As to quaternary structure, interacts with CDCP1. Interacts (via C-terminus) with TIAM1 (via PDZ domain). Interacts with MDK. Post-translationally, shedding is enhanced by a number of factors such as heparanase, thrombin or EGF. Also by stress and wound healing. PMA-mediated shedding is inhibited by TIMP3. In terms of tissue distribution, detected in placenta (at protein level). Detected in fibroblasts (at protein level).

Its subcellular location is the membrane. The protein resides in the secreted. It is found in the extracellular exosome. Its function is as follows. Cell surface proteoglycan that contains both heparan sulfate and chondroitin sulfate and that links the cytoskeleton to the interstitial matrix. Regulates exosome biogenesis in concert with SDCBP and PDCD6IP. Able to induce its own expression in dental mesenchymal cells and also in the neighboring dental epithelial cells via an MSX1-mediated pathway. This chain is Syndecan-1, found in Homo sapiens (Human).